The primary structure comprises 176 residues: Protein CURLY FLAG LEAF 2 (176 aa).

The short motif at 41-46 (FLELSS) is the EAR element. Residues 48–82 (FSVPSHLEQCLDLKTGEIYYRSWNSGMRVKEDPRK) enclose the WW domain. 2 disordered regions span residues 77–106 (KEDPRKSMSRGNYADQSSGESSGTVFSSEE) and 111–130 (YESEESSSESSPSSRKYHKE). Residues 93-106 (SSGESSGTVFSSEE) are compositionally biased toward low complexity.

As to quaternary structure, may interact with BHLH122/CFLAP1 and BHLH80/CFLAP2.

May negatively regulate the cuticle development by interacting with the HD-ZIP IV transcription factor HDG1. This is Protein CURLY FLAG LEAF 2 from Arabidopsis thaliana (Mouse-ear cress).